Consider the following 906-residue polypeptide: Transmembrane channel-like protein 2 (906 aa).

Positions 1–150 (MSHQVKGLKE…SASGGESLSE (150 aa)) are disordered. The Cytoplasmic segment spans residues 1 to 263 (MSHQVKGLKE…IFLRWMYGVN (263 aa)). Residues 69-79 (PRRKQTGRRRH) show a composition bias toward basic residues. A compositionally biased stretch (basic and acidic residues) spans 80-127 (REELGEQERGEAERTCEGRRKRDERASFQERTAAPKREKEIPRREEKS). The span at 135–147 (SSSLASSASGGES) shows a compositional bias: low complexity. The chain crosses the membrane as a helical span at residues 264–284 (LVLFGLIFGLVIIPEVLMGMP). The Extracellular portion of the chain corresponds to 285-336 (YGSIPRKTVPRAEEEKAMDFSVLWDFEGYIKYSALFYGYYNNQRTIGWLRYR). The helical transmembrane segment at 337–357 (LPMAYFMVGVSVFGYSLIIVI) threads the bilayer. At 358 to 431 (RSMASNTQGS…NIHLTRFLRV (74 aa)) the chain is on the cytoplasmic side. Residues 432 to 452 (LANFLIICCLCGSGYLIYFVV) traverse the membrane as a helical segment. Residues 453–508 (KRSQQFSKMQNVSWYERNEVEIVMSLLGMFCPPLFETIAALENYHPRTGLKWQLGR) lie on the Extracellular side of the membrane. A helical membrane pass occupies residues 509-529 (IFALFLGNLYTFLLALMDDVH). The Cytoplasmic segment spans residues 530–693 (LKLANEETIK…RVFKASRSNN (164 aa)). Residues 694-714 (FYMGLLLLVLFLSLLPVAYTI) form a helical membrane-spanning segment. Residues 715-750 (MSLPPSFDCGPFSGKNRMYDVLQETIENDFPTFLGK) lie on the Extracellular side of the membrane. A helical membrane pass occupies residues 751 to 771 (IFAFLANPGLIIPAILLMFLA). Topologically, residues 772–906 (IYYLNSVSKS…SGKSAQRPPH (135 aa)) are cytoplasmic. The interval 800 to 906 (EKSHKSVKGK…SGKSAQRPPH (107 aa)) is disordered. Composition is skewed to polar residues over residues 820–846 (KSSS…QSQA), 854–866 (PGTS…TTLP), and 886–900 (APSQ…SGKS).

This sequence belongs to the TMC family. In terms of assembly, forms the MET channel composed of TMC dimer (TMC1 or TMC2), TMIE, TOMT, CIB (CIB2 or CIB3), LHFPL5 and PDH15. The interaction of TMC1 and TMC2 with TOMT is required for the transportation of TMC1/2 into the stereocilia of hair cells. Interacts (via N-terminus) with both isoforms CD1 and CD3 of PCDH15. Can form a heterodimer with TMC1, TMC5 or TMC7. In terms of tissue distribution, detected in fetal cochlea.

It is found in the cell membrane. It catalyses the reaction Ca(2+)(in) = Ca(2+)(out). Pore-forming subunit of the mechanotransducer (MET) non-selective cation channel complex located at the tips of stereocilia of cochlear hair cells and that mediates sensory transduction in the auditory system. The MET complex is composed of two dimeric pore-forming ion-conducting transmembrane TMC (TMC1 or TMC2) subunits, and aided by several auxiliary proteins including LHFPL5, TMIE, CIB2/3 and TOMT, and the tip-link PCDH15. MET channel is activated by tension in the tip-link extending from the side wall of one stereocilium to the tip of the adjacent shorter stereocilium, where the channel is located. TMC2 MET channel is highly permeable to calcium and likely transports monovalent cations. Also involved in vestibular hair cell transduction current of the mammalian inner ear. In Homo sapiens (Human), this protein is Transmembrane channel-like protein 2.